The sequence spans 405 residues: Acetylornithine/succinyldiaminopimelate aminotransferase (405 aa).

Pyridoxal 5'-phosphate contacts are provided by residues 107-108 (GA) and Phe-140. A N(2)-acetyl-L-ornithine-binding site is contributed by Arg-143. 225 to 228 (DEVQ) contributes to the pyridoxal 5'-phosphate binding site. The residue at position 254 (Lys-254) is an N6-(pyridoxal phosphate)lysine. Thr-282 is a binding site for N(2)-acetyl-L-ornithine. Residue Thr-283 coordinates pyridoxal 5'-phosphate.

It belongs to the class-III pyridoxal-phosphate-dependent aminotransferase family. ArgD subfamily. As to quaternary structure, homodimer. The cofactor is pyridoxal 5'-phosphate.

The protein resides in the cytoplasm. The enzyme catalyses N(2)-acetyl-L-ornithine + 2-oxoglutarate = N-acetyl-L-glutamate 5-semialdehyde + L-glutamate. It carries out the reaction N-succinyl-(2S,6S)-2,6-diaminopimelate + 2-oxoglutarate = (S)-2-succinylamino-6-oxoheptanedioate + L-glutamate. It functions in the pathway amino-acid biosynthesis; L-arginine biosynthesis; N(2)-acetyl-L-ornithine from L-glutamate: step 4/4. The protein operates within amino-acid biosynthesis; L-lysine biosynthesis via DAP pathway; LL-2,6-diaminopimelate from (S)-tetrahydrodipicolinate (succinylase route): step 2/3. In terms of biological role, involved in both the arginine and lysine biosynthetic pathways. The sequence is that of Acetylornithine/succinyldiaminopimelate aminotransferase from Yersinia pestis.